Here is an 821-residue protein sequence, read N- to C-terminus: Probable phosphoenolpyruvate synthase (821 aa).

Histidine 444 serves as the catalytic Tele-phosphohistidine intermediate. Arginine 543, arginine 590, glutamate 687, glycine 709, threonine 710, asparagine 711, and aspartate 712 together coordinate substrate. Glutamate 687 is a binding site for Mg(2+). Aspartate 712 serves as a coordination point for Mg(2+). Catalysis depends on cysteine 759, which acts as the Proton donor.

It belongs to the PEP-utilizing enzyme family. Mg(2+) is required as a cofactor.

It carries out the reaction pyruvate + ATP + H2O = phosphoenolpyruvate + AMP + phosphate + 2 H(+). It participates in carbohydrate biosynthesis; gluconeogenesis. Catalyzes the phosphorylation of pyruvate to phosphoenolpyruvate. The sequence is that of Probable phosphoenolpyruvate synthase (ppsA) from Pyrococcus horikoshii (strain ATCC 700860 / DSM 12428 / JCM 9974 / NBRC 100139 / OT-3).